Consider the following 683-residue polypeptide: uncharacterized protein (683 aa).

A run of 14 helical transmembrane segments spans residues leucine 12–leucine 32, leucine 41–isoleucine 61, methionine 84–phenylalanine 104, glycine 110–proline 130, isoleucine 162–valine 182, phenylalanine 194–methionine 214, glutamine 221–tryptophan 241, leucine 377–leucine 397, valine 413–leucine 433, isoleucine 495–leucine 515, valine 548–leucine 568, isoleucine 573–valine 593, alanine 603–valine 623, and isoleucine 645–leucine 665.

Belongs to the sodium:solute symporter (SSF) (TC 2.A.21) family.

It localises to the cell membrane. This is an uncharacterized protein from Cupriavidus necator (strain ATCC 17699 / DSM 428 / KCTC 22496 / NCIMB 10442 / H16 / Stanier 337) (Ralstonia eutropha).